Here is a 643-residue protein sequence, read N- to C-terminus: Phosphatidylinositol-3,5-bisphosphate 3-phosphatase MTMR2 (643 aa).

Polar residues-rich tracts occupy residues 1–12 (MEKSSSCESLGS) and 23–40 (DSLS…VHTK). Residues 1–56 (MEKSSSCESLGSQPAAARPPSVDSLSSASTSHSENSVHTKSASVVSSDSISTSADN) form a disordered region. Phosphoserine occurs at positions 6 and 9. The segment covering 41–55 (SASVVSSDSISTSAD) has biased composition (low complexity). Ser-58 is subject to Phosphoserine. Residues 68–139 (NKLAEMEEPP…GVINRVEKIG (72 aa)) form the GRAM domain. In terms of domain architecture, Myotubularin phosphatase spans 205 to 580 (GWKLYDPLLE…RHLELWVGYY (376 aa)). 3 residues coordinate a 1,2-diacyl-sn-glycero-3-phospho-(1D-myo-inositol-3,5-bisphosphate): Asn-330, Asn-355, and Ile-356. Residues Asn-330, Asn-355, and Ile-356 each coordinate a 1,2-diacyl-sn-glycero-3-phospho-(1D-myo-inositol-3-phosphate). The active-site Phosphocysteine intermediate is Cys-417. Residues Ser-418, Asp-419, Gly-420, Trp-421, Asp-422, Arg-423, Arg-459, and Arg-463 each coordinate a 1,2-diacyl-sn-glycero-3-phospho-(1D-myo-inositol-3,5-bisphosphate). Positions 418, 419, 420, 421, 422, and 423 each coordinate a 1,2-diacyl-sn-glycero-3-phospho-(1D-myo-inositol-3-phosphate). Position 463 (Arg-463) interacts with a 1,2-diacyl-sn-glycero-3-phospho-(1D-myo-inositol-3-phosphate). Residues 593–627 (IHNRYKELLAKRAELQKKVEELQREISNRSTSSSE) adopt a coiled-coil conformation. The segment at 615-643 (QREISNRSTSSSERASSPAQCVTPVQTVV) is disordered. The span at 620 to 631 (NRSTSSSERASS) shows a compositional bias: low complexity. Polar residues predominate over residues 632 to 643 (PAQCVTPVQTVV).

It belongs to the protein-tyrosine phosphatase family. Non-receptor class myotubularin subfamily. In terms of assembly, homodimer (via coiled-coil domain). Heterotetramer consisting of one MTMR2 dimer and one SBF2/MTMR13 dimer; specifically in peripheral nerves stabilizes SBF2/MTMR13 at the membranes and increases MTMR2 catalytic activity towards phosphatidylinositol 3,5-bisphosphate and to a lesser extent towards phosphatidylinositol 3-phosphate. Heterodimer with SBF1/MTMR5; acts as an adapter for the phosphatase MTMR2 to regulate MTMR2 catalytic activity and subcellular location. Heterodimer with MTMR12. Post-translationally, phosphorylation at Ser-58 decreases MTMR2 localization to endocytic vesicular structures.

The protein localises to the cytoplasm. It is found in the early endosome membrane. Its subcellular location is the perinuclear region. It localises to the cell projection. The protein resides in the axon. The protein localises to the endosome membrane. The enzyme catalyses a 1,2-diacyl-sn-glycero-3-phospho-(1D-myo-inositol-3,5-bisphosphate) + H2O = a 1,2-diacyl-sn-glycero-3-phospho-(1D-myo-inositol-5-phosphate) + phosphate. It catalyses the reaction a 1,2-diacyl-sn-glycero-3-phospho-(1D-myo-inositol-3-phosphate) + H2O = a 1,2-diacyl-sn-glycero-3-phospho-(1D-myo-inositol) + phosphate. The catalysed reaction is 1,2-dioctanoyl-sn-glycero-3-phospho-(1-D-myo-inositol-3-phosphate) + H2O = 1,2-dioctanoyl-sn-glycero-3-phospho-(1D-myo-inositol) + phosphate. It carries out the reaction 1,2-dioctanoyl-sn-glycero-3-phospho-(1D-myo-inositol-3,5-bisphosphate) + H2O = 1,2-dioctanoyl-sn-glycero-3-phospho-(1D-myo-inositol-5-phosphate) + phosphate. Functionally, lipid phosphatase that specifically dephosphorylates the D-3 position of phosphatidylinositol 3-phosphate and phosphatidylinositol 3,5-bisphosphate, generating phosphatidylinositol and phosphatidylinositol 5-phosphate. Regulates the level of these phosphoinositides critical for various biological processes including autophagy initiation and autophagosome maturation. This chain is Phosphatidylinositol-3,5-bisphosphate 3-phosphatase MTMR2, found in Homo sapiens (Human).